The sequence spans 171 residues: ATP synthase subunit b 2 (171 aa).

Residues Ala-9 to Phe-29 form a helical membrane-spanning segment.

The protein belongs to the ATPase B chain family. As to quaternary structure, F-type ATPases have 2 components, F(1) - the catalytic core - and F(0) - the membrane proton channel. F(1) has five subunits: alpha(3), beta(3), gamma(1), delta(1), epsilon(1). F(0) has three main subunits: a(1), b(2) and c(10-14). The alpha and beta chains form an alternating ring which encloses part of the gamma chain. F(1) is attached to F(0) by a central stalk formed by the gamma and epsilon chains, while a peripheral stalk is formed by the delta and b chains.

Its subcellular location is the cell inner membrane. Its function is as follows. F(1)F(0) ATP synthase produces ATP from ADP in the presence of a proton or sodium gradient. F-type ATPases consist of two structural domains, F(1) containing the extramembraneous catalytic core and F(0) containing the membrane proton channel, linked together by a central stalk and a peripheral stalk. During catalysis, ATP synthesis in the catalytic domain of F(1) is coupled via a rotary mechanism of the central stalk subunits to proton translocation. Functionally, component of the F(0) channel, it forms part of the peripheral stalk, linking F(1) to F(0). The chain is ATP synthase subunit b 2 from Granulibacter bethesdensis (strain ATCC BAA-1260 / CGDNIH1).